The following is a 297-amino-acid chain: Thiosulfate sulfurtransferase (297 aa).

Lys-14 carries the N6-acetyllysine; alternate modification. Lys-14 is subject to N6-succinyllysine; alternate. Positions 25 to 143 (LGPGLRVLDA…WLKEGHPVTS (119 aa)) constitute a Rhodanese 1 domain. Ser-35 carries an O-linked (GlcNAc) serine glycan. Position 38 is a phosphoserine (Ser-38). N6-acetyllysine; alternate is present on Lys-136. Lys-136 bears the N6-succinyllysine; alternate mark. The tract at residues 144–159 (EPSRPEPAVFKATLDR) is hinge. Lys-163 is subject to N6-acetyllysine. Residues 173 to 288 (QSKRFQLVDS…WFHQAPPETR (116 aa)) enclose the Rhodanese 2 domain. At Lys-175 the chain carries N6-acetyllysine; alternate. Lys-175 is subject to N6-succinyllysine; alternate. Arg-187 is a substrate binding site. Lys-224 carries the post-translational modification N6-acetyllysine; alternate. Lys-224 carries the N6-succinyllysine; alternate modification. An N6-acetyllysine modification is found at Lys-236. The residue at position 237 (Lys-237) is an N6-acetyllysine; alternate. The residue at position 237 (Lys-237) is an N6-succinyllysine; alternate. Cys-248 functions as the Cysteine persulfide intermediate in the catalytic mechanism. Lys-250 provides a ligand contact to substrate.

In terms of assembly, monomer.

It is found in the mitochondrion matrix. The enzyme catalyses thiosulfate + hydrogen cyanide = thiocyanate + sulfite + 2 H(+). Together with MRPL18, acts as a mitochondrial import factor for the cytosolic 5S rRNA. Only the nascent unfolded cytoplasmic form is able to bind to the 5S rRNA. Formation of iron-sulfur complexes and cyanide detoxification. Binds molecular oxygen and sulfur. This Cricetulus griseus (Chinese hamster) protein is Thiosulfate sulfurtransferase (TST).